Consider the following 416-residue polypeptide: CinA-like protein (416 aa).

Belongs to the CinA family.

This is CinA-like protein from Thermosynechococcus vestitus (strain NIES-2133 / IAM M-273 / BP-1).